A 337-amino-acid chain; its full sequence is Cytoskeleton protein RodZ (337 aa).

Residues 1–111 lie on the Cytoplasmic side of the membrane; sequence MNTEATHDQN…LGKRRKKRDG (111 aa). The 53-residue stretch at 19 to 71 folds into the HTH cro/C1-type domain; sequence LRNAREQLGLSQQAVAERLCLKVSTVRDIEEDKAPADLASTFLRGYIRSYARL. The H-T-H motif DNA-binding region spans 30–49; the sequence is QQAVAERLCLKVSTVRDIEE. Residues 112–132 traverse the membrane as a helical; Signal-anchor for type II membrane protein segment; that stretch reads WLMTFTWLVLFVVIGLSGAWW. The Periplasmic portion of the chain corresponds to 133–337; that stretch reads WQDHKAQQEE…TLNAEQSPAQ (205 aa). Positions 145–167 are enriched in polar residues; sequence TMADQSSAELSSNSEQGQSVPLN. The disordered stretch occupies residues 145 to 220; that stretch reads TMADQSSAEL…VSPSQANVDT (76 aa). The segment covering 168–207 has biased composition (low complexity); sequence TSTTTDPATTSTPPASVDTTATNTQTPAVTAPAPAVDPQQ. Positions 208–218 are enriched in polar residues; that stretch reads NAVVSPSQANV.

Belongs to the RodZ family.

Its subcellular location is the cell inner membrane. Its function is as follows. Cytoskeletal protein that is involved in cell-shape control through regulation of the length of the long axis. This Escherichia coli O17:K52:H18 (strain UMN026 / ExPEC) protein is Cytoskeleton protein RodZ.